A 233-amino-acid chain; its full sequence is Uridylate kinase (233 aa).

Residue 9-10 (GS) coordinates ATP. Residue glycine 43 participates in UMP binding. ATP contacts are provided by glycine 44 and arginine 48. UMP-binding positions include aspartate 65 and 113-119 (VTPGQTT). The ATP site is built by threonine 139, tyrosine 145, and aspartate 148.

The protein belongs to the UMP kinase family. As to quaternary structure, homohexamer.

It is found in the cytoplasm. It carries out the reaction UMP + ATP = UDP + ADP. Its pathway is pyrimidine metabolism; CTP biosynthesis via de novo pathway; UDP from UMP (UMPK route): step 1/1. With respect to regulation, inhibited by UTP. In terms of biological role, catalyzes the reversible phosphorylation of UMP to UDP. The chain is Uridylate kinase from Methanosarcina acetivorans (strain ATCC 35395 / DSM 2834 / JCM 12185 / C2A).